Consider the following 252-residue polypeptide: Thiazole synthase (252 aa).

The active-site Schiff-base intermediate with DXP is lysine 91. Residues glycine 152, 179–180, and 201–202 contribute to the 1-deoxy-D-xylulose 5-phosphate site; these read AG and NT.

Belongs to the ThiG family. In terms of assembly, homotetramer. Forms heterodimers with either ThiH or ThiS.

It is found in the cytoplasm. The catalysed reaction is [ThiS sulfur-carrier protein]-C-terminal-Gly-aminoethanethioate + 2-iminoacetate + 1-deoxy-D-xylulose 5-phosphate = [ThiS sulfur-carrier protein]-C-terminal Gly-Gly + 2-[(2R,5Z)-2-carboxy-4-methylthiazol-5(2H)-ylidene]ethyl phosphate + 2 H2O + H(+). Its pathway is cofactor biosynthesis; thiamine diphosphate biosynthesis. Its function is as follows. Catalyzes the rearrangement of 1-deoxy-D-xylulose 5-phosphate (DXP) to produce the thiazole phosphate moiety of thiamine. Sulfur is provided by the thiocarboxylate moiety of the carrier protein ThiS. In vitro, sulfur can be provided by H(2)S. This Erwinia pyrifoliae (strain DSM 12162 / Ep1/96) protein is Thiazole synthase.